Consider the following 101-residue polypeptide: MIPGELITDGPDHLLNEGRRTVTLVVQNTADRPIQVGSHYHFAETNAALGFDRDAARGMRLNIASGTAVRFEPGQQRTVELVDFAGERKIYGFRGLIQGAL.

The protein belongs to the urease beta subunit family. In terms of assembly, heterotrimer of UreA (gamma), UreB (beta) and UreC (alpha) subunits. Three heterotrimers associate to form the active enzyme.

Its subcellular location is the cytoplasm. It carries out the reaction urea + 2 H2O + H(+) = hydrogencarbonate + 2 NH4(+). It functions in the pathway nitrogen metabolism; urea degradation; CO(2) and NH(3) from urea (urease route): step 1/1. The protein is Urease subunit beta of Polaromonas naphthalenivorans (strain CJ2).